We begin with the raw amino-acid sequence, 953 residues long: Protein ENHANCER OF LHP1 1 (953 aa).

7 WD repeats span residues 15 to 55, 60 to 99, 102 to 143, 144 to 183, 192 to 232, 236 to 275, and 277 to 316; these read GGSA…TLPP, HHQD…FQTN, RFTL…RVLK, GHKG…VSFT, GFNT…KLFA, DHLE…DIDR, and KFEE…SMLS. 3 disordered regions span residues 347–370, 385–419, and 851–877; these read SESL…RKRL, EELN…GAFK, and ESKV…SATK. Residues 349–359 are compositionally biased toward acidic residues; sequence SLDDAMGDSDD. Residues 853–877 are compositionally biased toward polar residues; the sequence is KVQNPPASIQTSENTEAVMKSSATK. The Nuclear localization signal motif lies at 900 to 907; the sequence is TKKDKSDD. The tract at residues 919–953 is disordered; sequence KNPVNNVNKEDKGQEKEVNQGEARRSSNPFLKSTV. Over residues 926–943 the composition is skewed to basic and acidic residues; it reads NKEDKGQEKEVNQGEARR. The segment covering 944 to 953 has biased composition (polar residues); the sequence is SSNPFLKSTV.

Interacts with EZA1/SWN, LHP1, SLD5 and CLF in the nucleus. In terms of tissue distribution, expressed in root meristematic zones, initiating lateral roots, young leaves and the shoot apex.

The protein resides in the nucleus. Its function is as follows. Participates in maintaining the H3K27me3 mark at target genes by interacting with LHP1-PRC2 complexes during replication, thus contributing to H3K27me3 inheritance. In Arabidopsis thaliana (Mouse-ear cress), this protein is Protein ENHANCER OF LHP1 1.